A 223-amino-acid polypeptide reads, in one-letter code: Phosphoribosylformylglycinamidine synthase subunit PurQ (223 aa).

The Glutamine amidotransferase type-1 domain occupies 4–223 (RIGVITFPGT…FQSVLSTLVS (220 aa)). The active-site Nucleophile is C87. Residues H195 and E197 contribute to the active site.

In terms of assembly, part of the FGAM synthase complex composed of 1 PurL, 1 PurQ and 2 PurS subunits.

It is found in the cytoplasm. It catalyses the reaction N(2)-formyl-N(1)-(5-phospho-beta-D-ribosyl)glycinamide + L-glutamine + ATP + H2O = 2-formamido-N(1)-(5-O-phospho-beta-D-ribosyl)acetamidine + L-glutamate + ADP + phosphate + H(+). The enzyme catalyses L-glutamine + H2O = L-glutamate + NH4(+). It functions in the pathway purine metabolism; IMP biosynthesis via de novo pathway; 5-amino-1-(5-phospho-D-ribosyl)imidazole from N(2)-formyl-N(1)-(5-phospho-D-ribosyl)glycinamide: step 1/2. In terms of biological role, part of the phosphoribosylformylglycinamidine synthase complex involved in the purines biosynthetic pathway. Catalyzes the ATP-dependent conversion of formylglycinamide ribonucleotide (FGAR) and glutamine to yield formylglycinamidine ribonucleotide (FGAM) and glutamate. The FGAM synthase complex is composed of three subunits. PurQ produces an ammonia molecule by converting glutamine to glutamate. PurL transfers the ammonia molecule to FGAR to form FGAM in an ATP-dependent manner. PurS interacts with PurQ and PurL and is thought to assist in the transfer of the ammonia molecule from PurQ to PurL. The polypeptide is Phosphoribosylformylglycinamidine synthase subunit PurQ (Corynebacterium jeikeium (strain K411)).